The following is a 107-amino-acid chain: MFSKLAIFATAAFAVLAAATPVRRQQCTTGQLQCCESTSTANDPATSELLGLIGVVISDVDALVGLTCSPISVIGVGSGSACTANPVCCDSSPIGGLVSIGCVPVNV.

Positions 1–24 (MFSKLAIFATAAFAVLAAATPVRR) are cleaved as a signal peptide. 4 disulfides stabilise this stretch: Cys-27–Cys-88, Cys-34–Cys-82, Cys-35–Cys-68, and Cys-89–Cys-102.

Belongs to the fungal hydrophobin family. As to quaternary structure, self-assembles to form functional amyloid fibrils called rodlets with a length range 100-150 nm. Self-assembly into fibrillar rodlets occurs spontaneously at hydrophobic:hydrophilic interfaces and the rodlets further associate laterally to form amphipathic monolayers. In terms of tissue distribution, only weekly expressed in hyphae cultured in liquid medium.

Its subcellular location is the secreted. It localises to the cell wall. Aerial growth, conidiation, and dispersal of filamentous fungi in the environment rely upon a capability of their secreting small amphipathic proteins called hydrophobins (HPBs) with low sequence identity. Class I can self-assemble into an outermost layer of rodlet bundles on aerial cell surfaces, conferring cellular hydrophobicity that supports fungal growth, development and dispersal; whereas Class II form highly ordered films at water-air interfaces through intermolecular interactions but contribute nothing to the rodlet structure. HgfI is a class I hydrophobin that is involved in cell surface hydrophobicity and lowers the surface tension of water and change the nature of the surfaces to which it adsorbs. The chain is Class I hydrophobin hgfI from Grifola frondosa (Maitake).